We begin with the raw amino-acid sequence, 456 residues long: Phosphomethylpyrimidine synthase (456 aa).

Substrate-binding positions include Asn80, Met109, Tyr139, His175, 195–197, 236–239, and Glu275; these read SRG and DSLR. His279 contacts Zn(2+). Tyr302 contributes to the substrate binding site. His343 is a binding site for Zn(2+). [4Fe-4S] cluster-binding residues include Cys423, Cys426, and Cys431.

It belongs to the ThiC family. The cofactor is [4Fe-4S] cluster.

It catalyses the reaction 5-amino-1-(5-phospho-beta-D-ribosyl)imidazole + S-adenosyl-L-methionine = 4-amino-2-methyl-5-(phosphooxymethyl)pyrimidine + CO + 5'-deoxyadenosine + formate + L-methionine + 3 H(+). Its pathway is cofactor biosynthesis; thiamine diphosphate biosynthesis. Its function is as follows. Catalyzes the synthesis of the hydroxymethylpyrimidine phosphate (HMP-P) moiety of thiamine from aminoimidazole ribotide (AIR) in a radical S-adenosyl-L-methionine (SAM)-dependent reaction. This chain is Phosphomethylpyrimidine synthase, found in Prochlorococcus marinus subsp. pastoris (strain CCMP1986 / NIES-2087 / MED4).